A 548-amino-acid chain; its full sequence is Glucose-6-phosphate isomerase (548 aa).

Catalysis depends on E355, which acts as the Proton donor. Residues H386 and K511 contribute to the active site.

It belongs to the GPI family.

Its subcellular location is the cytoplasm. It catalyses the reaction alpha-D-glucose 6-phosphate = beta-D-fructose 6-phosphate. The protein operates within carbohydrate biosynthesis; gluconeogenesis. It participates in carbohydrate degradation; glycolysis; D-glyceraldehyde 3-phosphate and glycerone phosphate from D-glucose: step 2/4. Catalyzes the reversible isomerization of glucose-6-phosphate to fructose-6-phosphate. The protein is Glucose-6-phosphate isomerase of Wigglesworthia glossinidia brevipalpis.